The following is a 295-amino-acid chain: Acetylglutamate kinase (295 aa).

Substrate-binding positions include 67–68 (GG), Arg89, and Asn191.

Belongs to the acetylglutamate kinase family. ArgB subfamily.

The protein resides in the cytoplasm. It carries out the reaction N-acetyl-L-glutamate + ATP = N-acetyl-L-glutamyl 5-phosphate + ADP. It functions in the pathway amino-acid biosynthesis; L-arginine biosynthesis; N(2)-acetyl-L-ornithine from L-glutamate: step 2/4. Its function is as follows. Catalyzes the ATP-dependent phosphorylation of N-acetyl-L-glutamate. The protein is Acetylglutamate kinase of Nitrosomonas eutropha (strain DSM 101675 / C91 / Nm57).